Consider the following 425-residue polypeptide: Serine--tRNA ligase (425 aa).

Thr-233–Glu-235 is an L-serine binding site. Arg-264 to Glu-266 is an ATP binding site. Glu-287 serves as a coordination point for L-serine. Glu-351–Ser-354 provides a ligand contact to ATP. Position 385 (Ser-385) interacts with L-serine.

The protein belongs to the class-II aminoacyl-tRNA synthetase family. Type-1 seryl-tRNA synthetase subfamily. As to quaternary structure, homodimer. The tRNA molecule binds across the dimer.

It localises to the cytoplasm. It catalyses the reaction tRNA(Ser) + L-serine + ATP = L-seryl-tRNA(Ser) + AMP + diphosphate + H(+). The enzyme catalyses tRNA(Sec) + L-serine + ATP = L-seryl-tRNA(Sec) + AMP + diphosphate + H(+). It participates in aminoacyl-tRNA biosynthesis; selenocysteinyl-tRNA(Sec) biosynthesis; L-seryl-tRNA(Sec) from L-serine and tRNA(Sec): step 1/1. Catalyzes the attachment of serine to tRNA(Ser). Is also able to aminoacylate tRNA(Sec) with serine, to form the misacylated tRNA L-seryl-tRNA(Sec), which will be further converted into selenocysteinyl-tRNA(Sec). This Synechococcus sp. (strain WH7803) protein is Serine--tRNA ligase.